The primary structure comprises 202 residues: Small ribosomal subunit protein uS2 (202 aa).

It belongs to the universal ribosomal protein uS2 family.

The polypeptide is Small ribosomal subunit protein uS2 (rps2) (Pyrococcus horikoshii (strain ATCC 700860 / DSM 12428 / JCM 9974 / NBRC 100139 / OT-3)).